Reading from the N-terminus, the 1158-residue chain is Protein transport protein Sec31B (1158 aa).

WD repeat units lie at residues 4–47 (KELE…EIFE), 65–110 (VSSR…SSGK), 119–159 (KHTG…VPMT), 166–206 (NPPE…PIIK), 209–254 (SHSS…SPLK), 258–298 (SHSR…VVYK), and 301–341 (TQSS…WEAQ). A WD 8; interaction with SEC13 repeat occupies 376–407 (SFAFGGKLVTFGLPSIPVQPVAQACSRPVFIS). Disordered regions lie at residues 485–520 (LKSD…HTAK), 797–843 (TSSY…SSDH), and 968–1010 (GPQD…PEPQ). A compositionally biased stretch (low complexity) spans 822 to 840 (QPSSVMPFSPSQPSPSQGS).

The protein belongs to the WD repeat SEC31 family. As to quaternary structure, COPII is composed of at least 5 proteins: the SEC23/24 complex, the SEC13/31 complex and SAR1. SEC13 and SEC31 make a 2:2 tetramer that forms the edge element of the COPII outer coat. The tetramer self-assembles in multiple copies to form the complete polyhedral cage. Interacts (via WD 8) with SEC13. Interacts with SEC31A. Monoubiquitinated by the BCR(KLHL12) E3 ubiquitin ligase complex, leading to regulate the size of COPII coats.

The protein localises to the cytoplasm. The protein resides in the cytoplasmic vesicle. It is found in the COPII-coated vesicle membrane. It localises to the endoplasmic reticulum membrane. In terms of biological role, as a component of the coat protein complex II (COPII), may function in vesicle budding and cargo export from the endoplasmic reticulum. This is Protein transport protein Sec31B (Sec31b) from Mus musculus (Mouse).